The chain runs to 197 residues: Xanthine phosphoribosyltransferase (197 aa).

Xanthine-binding residues include L20 and N27. 128–132 (ANGQA) lines the 5-phospho-alpha-D-ribose 1-diphosphate pocket. Residue K156 coordinates xanthine.

The protein belongs to the purine/pyrimidine phosphoribosyltransferase family. Xpt subfamily. As to quaternary structure, homodimer.

The protein localises to the cytoplasm. It carries out the reaction XMP + diphosphate = xanthine + 5-phospho-alpha-D-ribose 1-diphosphate. It functions in the pathway purine metabolism; XMP biosynthesis via salvage pathway; XMP from xanthine: step 1/1. Its function is as follows. Converts the preformed base xanthine, a product of nucleic acid breakdown, to xanthosine 5'-monophosphate (XMP), so it can be reused for RNA or DNA synthesis. The chain is Xanthine phosphoribosyltransferase from Bacillus mycoides (strain KBAB4) (Bacillus weihenstephanensis).